A 182-amino-acid chain; its full sequence is NADH-quinone oxidoreductase subunit I (182 aa).

4Fe-4S ferredoxin-type domains follow at residues 52 to 82 (LTRDPDGEERCVACNLCAVACPVGCISLQKA) and 92 to 121 (DFFRINFSRCIFCGLCEEACPTTAIQLTPD). Residues C62, C65, C68, C72, C101, C104, C107, and C111 each contribute to the [4Fe-4S] cluster site.

Belongs to the complex I 23 kDa subunit family. In terms of assembly, NDH-1 is composed of 13 different subunits. Subunits NuoA, H, J, K, L, M, N constitute the membrane sector of the complex. The cofactor is [4Fe-4S] cluster.

It is found in the cell inner membrane. The enzyme catalyses a quinone + NADH + 5 H(+)(in) = a quinol + NAD(+) + 4 H(+)(out). NDH-1 shuttles electrons from NADH, via FMN and iron-sulfur (Fe-S) centers, to quinones in the respiratory chain. The immediate electron acceptor for the enzyme in this species is believed to be ubiquinone. Couples the redox reaction to proton translocation (for every two electrons transferred, four hydrogen ions are translocated across the cytoplasmic membrane), and thus conserves the redox energy in a proton gradient. This chain is NADH-quinone oxidoreductase subunit I, found in Pseudomonas syringae pv. syringae (strain B728a).